The primary structure comprises 455 residues: Chromosomal replication initiator protein DnaA 2 (455 aa).

A domain I, interacts with DnaA modulators region spans residues 1-95 (MLTCNDCSTW…KRSSPLVTPS (95 aa)). Positions 96 to 112 (IAKPATEVSEENKDFQL) are domain II. Residues 113 to 328 (KLNGAYRFDN…GAINKLTAYC (216 aa)) are domain III, AAA+ region. Gly157, Gly159, Lys160, and Thr161 together coordinate ATP. Residues 329–455 (LLFNKPLTET…IAIDSPQHFV (127 aa)) are domain IV, binds dsDNA.

This sequence belongs to the DnaA family. Oligomerizes as a right-handed, spiral filament on DNA at oriC.

It localises to the cytoplasm. Functionally, plays an essential role in the initiation and regulation of chromosomal replication. ATP-DnaA binds to the origin of replication (oriC) to initiate formation of the DNA replication initiation complex once per cell cycle. Binds the DnaA box (a 9 base pair repeat at the origin) and separates the double-stranded (ds)DNA. Forms a right-handed helical filament on oriC DNA; dsDNA binds to the exterior of the filament while single-stranded (ss)DNA is stabiized in the filament's interior. The ATP-DnaA-oriC complex binds and stabilizes one strand of the AT-rich DNA unwinding element (DUE), permitting loading of DNA polymerase. After initiation quickly degrades to an ADP-DnaA complex that is not apt for DNA replication. Binds acidic phospholipids. The polypeptide is Chromosomal replication initiator protein DnaA 2 (Chlamydia trachomatis serovar D (strain ATCC VR-885 / DSM 19411 / UW-3/Cx)).